A 309-amino-acid polypeptide reads, in one-letter code: Epidermal retinol dehydrogenase 2 (309 aa).

The chain crosses the membrane as a helical span at residues 11 to 31; sequence LLVFLGKSLLSVLEALLFHVI. 44–68 lines the NADP(+) pocket; sequence LITGAGSGLGRLLALQFARLGAVLV. Ser177 is a binding site for substrate. The Proton acceptor role is filled by Tyr190. A helical transmembrane segment spans residues 270–290; it reads FLYFIVFLKSILPIKTGILIA.

The protein belongs to the short-chain dehydrogenases/reductases (SDR) family.

Its subcellular location is the endoplasmic reticulum membrane. The catalysed reaction is all-trans-retinol--[retinol-binding protein] + NAD(+) = all-trans-retinal--[retinol-binding protein] + NADH + H(+). It functions in the pathway cofactor metabolism; retinol metabolism. In terms of biological role, oxidoreductase with strong preference for NAD. Active in both the oxidative and reductive directions. Oxidizes all-trans-retinol in all-trans-retinaldehyde. No activity was detected with 11-cis-retinol or 11-cis-retinaldehyde as substrates with either NAD(+)/NADH or NADP(+)/NADPH. This is Epidermal retinol dehydrogenase 2 from Mus musculus (Mouse).